The following is a 1097-amino-acid chain: Platelet-derived growth factor receptor beta (1097 aa).

A signal peptide spans 1–31 (MGLPEVMPASVLRGQLLLFVLLLLGPQISQG). 3 consecutive Ig-like C2-type domains span residues 32–119 (LVIT…YIFV), 128–209 (PMDS…YSLQ), and 213–308 (INVS…INVT). Residues 32-531 (LVITPPGPEF…VVPHSLPFKV (500 aa)) lie on the Extracellular side of the membrane. 3 N-linked (GlcNAc...) asparagine glycosylation sites follow: asparagine 44, asparagine 88, and asparagine 102. Cysteine 53 and cysteine 99 are oxidised to a cystine. Cysteine 148 and cysteine 189 form a disulfide bridge. Residue asparagine 214 is glycosylated (N-linked (GlcNAc...) asparagine). Cysteine 234 and cysteine 290 are disulfide-bonded. 7 N-linked (GlcNAc...) asparagine glycosylation sites follow: asparagine 291, asparagine 306, asparagine 353, asparagine 370, asparagine 444, asparagine 467, and asparagine 478. The 109-residue stretch at 415-523 (PVRVLELSES…GRDSQEVTVV (109 aa)) folds into the Ig-like C2-type 4 domain. A disulfide bridge links cysteine 435 with cysteine 507. A helical membrane pass occupies residues 532–552 (VVISAILALVVLTVISLIILI). The Cytoplasmic segment spans residues 553 to 1097 (MLWQRKPRYE…PLAEAEDSFL (545 aa)). Residues tyrosine 561, tyrosine 578, and tyrosine 580 each carry the phosphotyrosine; by autocatalysis modification. The 363-residue stretch at 599–961 (LVLGRTLGSG…QLVLLLERLL (363 aa)) folds into the Protein kinase domain. ATP is bound by residues 605 to 613 (LGSGAFGQV) and lysine 633. At tyrosine 685 the chain carries Phosphotyrosine; by ABL1 and ABL2. Residues tyrosine 715, tyrosine 739, tyrosine 750, tyrosine 762, tyrosine 770, tyrosine 774, and tyrosine 777 each carry the phosphotyrosine; by autocatalysis modification. Catalysis depends on aspartate 825, which acts as the Proton acceptor. Tyrosine 856 carries the post-translational modification Phosphotyrosine; by autocatalysis. 2 positions are modified to phosphotyrosine; by ABL1 and ABL2: tyrosine 933 and tyrosine 969. Tyrosine 1008 and tyrosine 1020 each carry phosphotyrosine; by autocatalysis. The tract at residues 1016 to 1097 (TDNDYIIPLP…PLAEAEDSFL (82 aa)) is disordered. The segment covering 1042–1059 (SLASSTLNEVNTSSTISC) has biased composition (polar residues). Over residues 1072–1081 (EPEAQLEQPQ) the composition is skewed to low complexity.

The protein belongs to the protein kinase superfamily. Tyr protein kinase family. CSF-1/PDGF receptor subfamily. As to quaternary structure, interacts with homodimeric PDGFB and PDGFD, and with heterodimers formed by PDGFA and PDGFB. May also interact with homodimeric PDGFC. Monomer in the absence of bound ligand. Interaction with homodimeric PDGFB, heterodimers formed by PDGFA and PDGFB or homodimeric PDGFD, leads to receptor dimerization, where both PDGFRA homodimers and heterodimers with PDGFRB are observed. Interacts with SH2B2/APS. Interacts directly (tyrosine phosphorylated) with SHB. Interacts (tyrosine phosphorylated) with PIK3R1 and RASA1. Interacts (tyrosine phosphorylated) with CBL. Interacts (tyrosine phosphorylated) with SRC and SRC family kinases. Interacts (tyrosine phosphorylated) with PIK3C2B, maybe indirectly. Interacts (tyrosine phosphorylated) with SHC1, GRB7, GRB10 and NCK1. Interaction with GRB2 is mediated by SHC1. Interacts (via C-terminus) with NHERF1. Post-translationally, N-glycosylated. In terms of processing, ubiquitinated. After autophosphorylation, the receptor is polyubiquitinated, leading to its degradation. Autophosphorylated on tyrosine residues upon ligand binding. Autophosphorylation occurs in trans, i.e. one subunit of the dimeric receptor phosphorylates tyrosine residues on the other subunit. Phosphorylation at Tyr-578, and to a lesser degree, Tyr-580 is important for interaction with SRC. Phosphorylation at Tyr-715 is important for interaction with GRB2. Phosphorylation at Tyr-739 and Tyr-750 is important for interaction with PIK3R1. Phosphorylation at Tyr-750 is important for interaction with NCK1. Phosphorylation at Tyr-770 and Tyr-856 is important for interaction with RASA1/GAP. Phosphorylation at Tyr-856 is important for efficient phosphorylation of PLCG1 and PTPN11, resulting in increased phosphorylation of AKT1, MAPK1/ERK2 and/or MAPK3/ERK1, PDCD6IP/ALIX and STAM, and in increased cell proliferation. Phosphorylation at Tyr-1008 is important for interaction with PTPN11. Phosphorylation at Tyr-1008 and Tyr-1020 is important for interaction with PLCG1. Dephosphorylated by PTPRJ at Tyr-750, Tyr-856, Tyr-1008 and Tyr-1020. Dephosphorylated by PTPN2 at Tyr-578 and Tyr-1020.

It is found in the cell membrane. It localises to the cytoplasmic vesicle. The protein localises to the lysosome lumen. It carries out the reaction L-tyrosyl-[protein] + ATP = O-phospho-L-tyrosyl-[protein] + ADP + H(+). Present in an inactive conformation in the absence of bound ligand. Binding of PDGFB and/or PDGFD leads to dimerization and activation by autophosphorylation on tyrosine residues. Tyrosine-protein kinase that acts as a cell-surface receptor for homodimeric PDGFB and PDGFD and for heterodimers formed by PDGFA and PDGFB, and plays an essential role in the regulation of embryonic development, cell proliferation, survival, differentiation, chemotaxis and migration. Plays an essential role in blood vessel development by promoting proliferation, migration and recruitment of pericytes and smooth muscle cells to endothelial cells. Plays a role in the migration of vascular smooth muscle cells and the formation of neointima at vascular injury sites. Required for normal development of the cardiovascular system. Required for normal recruitment of pericytes (mesangial cells) in the kidney glomerulus, and for normal formation of a branched network of capillaries in kidney glomeruli. Promotes rearrangement of the actin cytoskeleton and the formation of membrane ruffles. Binding of its cognate ligands - homodimeric PDGFB, heterodimers formed by PDGFA and PDGFB or homodimeric PDGFD -leads to the activation of several signaling cascades; the response depends on the nature of the bound ligand and is modulated by the formation of heterodimers between PDGFRA and PDGFRB. Phosphorylates PLCG1, PIK3R1, PTPN11, RASA1/GAP, CBL, SHC1 and NCK1. Activation of PLCG1 leads to the production of the cellular signaling molecules diacylglycerol and inositol 1,4,5-trisphosphate, mobilization of cytosolic Ca(2+) and the activation of protein kinase C. Phosphorylation of PIK3R1, the regulatory subunit of phosphatidylinositol 3-kinase, leads to the activation of the AKT1 signaling pathway. Phosphorylation of SHC1, or of the C-terminus of PTPN11, creates a binding site for GRB2, resulting in the activation of HRAS, RAF1 and down-stream MAP kinases, including MAPK1/ERK2 and/or MAPK3/ERK1. Promotes phosphorylation and activation of SRC family kinases. Promotes phosphorylation of PDCD6IP/ALIX and STAM. Receptor signaling is down-regulated by protein phosphatases that dephosphorylate the receptor and its down-stream effectors, and by rapid internalization of the activated receptor. In Rattus norvegicus (Rat), this protein is Platelet-derived growth factor receptor beta (Pdgfrb).